The chain runs to 342 residues: Porphobilinogen deaminase (342 aa).

Cys-249 carries the S-(dipyrrolylmethanemethyl)cysteine modification. The tract at residues 323-342 (AAAKQGAAEDGAADSAATGE) is disordered.

Belongs to the HMBS family. As to quaternary structure, monomer. Requires dipyrromethane as cofactor.

The enzyme catalyses 4 porphobilinogen + H2O = hydroxymethylbilane + 4 NH4(+). It functions in the pathway porphyrin-containing compound metabolism; protoporphyrin-IX biosynthesis; coproporphyrinogen-III from 5-aminolevulinate: step 2/4. Its function is as follows. Tetrapolymerization of the monopyrrole PBG into the hydroxymethylbilane pre-uroporphyrinogen in several discrete steps. This is Porphobilinogen deaminase from Paraburkholderia phytofirmans (strain DSM 17436 / LMG 22146 / PsJN) (Burkholderia phytofirmans).